A 220-amino-acid chain; its full sequence is Superoxide dismutase [Cu-Zn], chloroplastic (220 aa).

The N-terminal 66 residues, 1-66, are a transit peptide targeting the chloroplast; it reads MAAHCILFSS…AAPKPLTVFA (66 aa). Positions 112, 114, and 129 each coordinate Cu cation. A disulfide bridge links Cys-123 with Cys-212. Zn(2+) is bound by residues His-129, His-137, His-146, and Asp-149. A Cu cation-binding site is contributed by His-186.

Belongs to the Cu-Zn superoxide dismutase family. Homotetramer. The cofactor is Cu cation. Zn(2+) serves as cofactor.

It localises to the plastid. The protein localises to the chloroplast. The enzyme catalyses 2 superoxide + 2 H(+) = H2O2 + O2. Its function is as follows. Destroys radicals which are normally produced within the cells and which are toxic to biological systems. The polypeptide is Superoxide dismutase [Cu-Zn], chloroplastic (SODCP) (Solidago canadensis var. scabra (Tall goldenrod)).